Consider the following 259-residue polypeptide: tRNA wybutosine-synthesizing protein 3 homolog (259 aa).

At serine 25 the chain carries Phosphoserine.

It belongs to the TYW3 family.

The enzyme catalyses 4-demethyl-7-[(3S)-3-amino-3-carboxypropyl]wyosine(37) in tRNA(Phe) + S-adenosyl-L-methionine = 7-[(3S)-3-amino-3-carboxypropyl]wyosine(37) in tRNA(Phe) + S-adenosyl-L-homocysteine + H(+). It participates in tRNA modification; wybutosine-tRNA(Phe) biosynthesis. In terms of biological role, probable S-adenosyl-L-methionine-dependent methyltransferase that acts as a component of the wybutosine biosynthesis pathway. Wybutosine is a hyper modified guanosine with a tricyclic base found at the 3'-position adjacent to the anticodon of eukaryotic phenylalanine tRNA. The protein is tRNA wybutosine-synthesizing protein 3 homolog (TYW3) of Homo sapiens (Human).